We begin with the raw amino-acid sequence, 135 residues long: Photosystem II extrinsic protein U (135 aa).

The N-terminal stretch at 1 to 29 is a signal peptide; the sequence is MKRLLSWLTGALVMASLMAGLVMPSSVYA.

Belongs to the PsbU family. As to quaternary structure, PSII is composed of 1 copy each of membrane proteins PsbA, PsbB, PsbC, PsbD, PsbE, PsbF, PsbH, PsbI, PsbJ, PsbK, PsbL, PsbM, PsbT, PsbX, PsbY, PsbZ, Psb30/Ycf12, peripheral proteins PsbO, CyanoQ (PsbQ), PsbU, PsbV and a large number of cofactors. It forms dimeric complexes.

The protein localises to the cellular thylakoid membrane. Functionally, one of the extrinsic, lumenal subunits of photosystem II (PSII). PSII is a light-driven water plastoquinone oxidoreductase, using light energy to abstract electrons from H(2)O, generating a proton gradient subsequently used for ATP formation. The extrinsic proteins stabilize the structure of photosystem II oxygen-evolving complex (OEC), the ion environment of oxygen evolution and protect the OEC against heat-induced inactivation. The chain is Photosystem II extrinsic protein U from Synechococcus sp. (strain CC9605).